The sequence spans 152 residues: Large ribosomal subunit protein bL17 (152 aa).

The disordered stretch occupies residues 121-140; that stretch reads APSASQKTGKQDRAKRVKGS.

Belongs to the bacterial ribosomal protein bL17 family. As to quaternary structure, part of the 50S ribosomal subunit. Contacts protein L32.

The sequence is that of Large ribosomal subunit protein bL17 from Pelodictyon phaeoclathratiforme (strain DSM 5477 / BU-1).